Here is a 326-residue protein sequence, read N- to C-terminus: ATP-dependent 6-phosphofructokinase (326 aa).

Gly-14 is a binding site for ATP. An ADP-binding site is contributed by 24–28; sequence RAVVR. ATP is bound by residues 75–76 and 105–108; these read RF and GNGS. Asn-106 contributes to the Mg(2+) binding site. Position 129 to 131 (129 to 131) interacts with substrate; that stretch reads TID. Residue Asp-131 is the Proton acceptor of the active site. Residue Arg-158 participates in ADP binding. Residues Arg-166 and 173–175 each bind substrate; that span reads MGR. Residues 189–191, Lys-215, and 216–218 each bind ADP; these read GAE and KSA. Substrate contacts are provided by residues Glu-225, Arg-248, and 254–257; that span reads HTQR.

This sequence belongs to the phosphofructokinase type A (PFKA) family. ATP-dependent PFK group I subfamily. Prokaryotic clade 'B1' sub-subfamily. Homotetramer. Requires Mg(2+) as cofactor.

It is found in the cytoplasm. The enzyme catalyses beta-D-fructose 6-phosphate + ATP = beta-D-fructose 1,6-bisphosphate + ADP + H(+). The protein operates within carbohydrate degradation; glycolysis; D-glyceraldehyde 3-phosphate and glycerone phosphate from D-glucose: step 3/4. Allosterically activated by ADP and other diphosphonucleosides, and allosterically inhibited by phosphoenolpyruvate. Catalyzes the phosphorylation of D-fructose 6-phosphate to fructose 1,6-bisphosphate by ATP, the first committing step of glycolysis. This chain is ATP-dependent 6-phosphofructokinase, found in Coxiella burnetii (strain RSA 493 / Nine Mile phase I).